Consider the following 496-residue polypeptide: Lysine--tRNA ligase (496 aa).

Residues Glu409 and Glu416 each contribute to the Mg(2+) site.

The protein belongs to the class-II aminoacyl-tRNA synthetase family. Homodimer. It depends on Mg(2+) as a cofactor.

It is found in the cytoplasm. The catalysed reaction is tRNA(Lys) + L-lysine + ATP = L-lysyl-tRNA(Lys) + AMP + diphosphate. The chain is Lysine--tRNA ligase from Streptococcus pneumoniae serotype 4 (strain ATCC BAA-334 / TIGR4).